The sequence spans 212 residues: MADLHRQLQDYLKQGKASRPAAAEPLLGAKAAEEPEAGAWLGSRVLRWPWAQSAAEPPPAGLRCLPSVTRGQRLVAGGLCLLLAALCFGLAALYAPVLLLRARKFALLWSLGSVLAWASAALLRGGPACGRLLRGEETPSRSTLGYAAALGATLYAALVLRSTVLTALGACAQVAALLYALIGLLPWGGVTALRLALGRLNRGTGLANALPV.

Over 1–78 the chain is Cytoplasmic; it reads MADLHRQLQD…TRGQRLVAGG (78 aa). A helical membrane pass occupies residues 79-99; it reads LCLLLAALCFGLAALYAPVLL. At 100–104 the chain is on the lumenal side; the sequence is LRARK. Residues 105-125 form a helical membrane-spanning segment; sequence FALLWSLGSVLAWASAALLRG. The Cytoplasmic portion of the chain corresponds to 126-142; that stretch reads GPACGRLLRGEETPSRS. Residues 143–165 traverse the membrane as a helical segment; it reads TLGYAAALGATLYAALVLRSTVL. Over 166–174 the chain is Lumenal; that stretch reads TALGACAQV. The chain crosses the membrane as a helical span at residues 175–197; that stretch reads AALLYALIGLLPWGGVTALRLAL. Residues 198–212 are Cytoplasmic-facing; that stretch reads GRLNRGTGLANALPV.

The protein belongs to the SFT2 family.

It localises to the membrane. Its function is as follows. May be involved in fusion of retrograde transport vesicles derived from an endocytic compartment with the Golgi complex. This Mus musculus (Mouse) protein is Vesicle transport protein SFT2C.